Here is a 307-residue protein sequence, read N- to C-terminus: Aspartate carbamoyltransferase catalytic subunit (307 aa).

Residues R58 and T59 each coordinate carbamoyl phosphate. L-aspartate is bound at residue K86. 3 residues coordinate carbamoyl phosphate: R108, H136, and Q139. Residues R169 and R223 each contribute to the L-aspartate site. Residues G264 and P265 each coordinate carbamoyl phosphate.

Belongs to the aspartate/ornithine carbamoyltransferase superfamily. ATCase family. As to quaternary structure, heterododecamer (2C3:3R2) of six catalytic PyrB chains organized as two trimers (C3), and six regulatory PyrI chains organized as three dimers (R2).

The enzyme catalyses carbamoyl phosphate + L-aspartate = N-carbamoyl-L-aspartate + phosphate + H(+). Its pathway is pyrimidine metabolism; UMP biosynthesis via de novo pathway; (S)-dihydroorotate from bicarbonate: step 2/3. Functionally, catalyzes the condensation of carbamoyl phosphate and aspartate to form carbamoyl aspartate and inorganic phosphate, the committed step in the de novo pyrimidine nucleotide biosynthesis pathway. The polypeptide is Aspartate carbamoyltransferase catalytic subunit (Syntrophus aciditrophicus (strain SB)).